The sequence spans 284 residues: Ribose-phosphate pyrophosphokinase 1 (284 aa).

ATP is bound at residue 34–36 (DGE). Positions 126 and 163 each coordinate Mg(2+). The active site involves lysine 186. D-ribose 5-phosphate contacts are provided by residues arginine 188, aspartate 211, and 215–219 (STGGT).

This sequence belongs to the ribose-phosphate pyrophosphokinase family. Class III (archaeal) subfamily. It depends on Mg(2+) as a cofactor.

Its subcellular location is the cytoplasm. It carries out the reaction D-ribose 5-phosphate + ATP = 5-phospho-alpha-D-ribose 1-diphosphate + AMP + H(+). It functions in the pathway metabolic intermediate biosynthesis; 5-phospho-alpha-D-ribose 1-diphosphate biosynthesis; 5-phospho-alpha-D-ribose 1-diphosphate from D-ribose 5-phosphate (route I): step 1/1. Involved in the biosynthesis of the central metabolite phospho-alpha-D-ribosyl-1-pyrophosphate (PRPP) via the transfer of pyrophosphoryl group from ATP to 1-hydroxyl of ribose-5-phosphate (Rib-5-P). This is Ribose-phosphate pyrophosphokinase 1 from Archaeoglobus fulgidus (strain ATCC 49558 / DSM 4304 / JCM 9628 / NBRC 100126 / VC-16).